The chain runs to 88 residues: Small ribosomal subunit protein uS17 (88 aa).

It belongs to the universal ribosomal protein uS17 family. As to quaternary structure, part of the 30S ribosomal subunit.

In terms of biological role, one of the primary rRNA binding proteins, it binds specifically to the 5'-end of 16S ribosomal RNA. The sequence is that of Small ribosomal subunit protein uS17 from Prochlorococcus marinus (strain SARG / CCMP1375 / SS120).